The chain runs to 215 residues: Interleukin-12 subunit alpha (215 aa).

A signal peptide spans Met1–Ala22. 3 cysteine pairs are disulfide-bonded: Cys33–Cys106, Cys60–Cys192, and Cys81–Cys119. Asn35, Asn89, and Asn167 each carry an N-linked (GlcNAc...) asparagine glycan.

Belongs to the IL-6 superfamily. As to quaternary structure, heterodimer with IL12B; disulfide-linked. This heterodimer is known as interleukin IL-12. Heterodimer with EBI3/IL27B; not disulfide-linked. This heterodimer is known as interleukin IL-35. Interacts with NBR1; this interaction promotes IL-12 secretion.

The protein localises to the secreted. Functionally, heterodimerizes with IL12B to form the IL-12 cytokine or with EBI3/IL27B to form the IL-35 cytokine. IL-12 is primarily produced by professional antigen-presenting cells (APCs) such as B-cells and dendritic cells (DCs) as well as macrophages and granulocytes and regulates T-cell and natural killer-cell responses, induces the production of interferon-gamma (IFN-gamma), favors the differentiation of T-helper 1 (Th1) cells and is an important link between innate resistance and adaptive immunity. Mechanistically, exerts its biological effects through a receptor composed of IL12R1 and IL12R2 subunits. Binding to the receptor results in the rapid tyrosine phosphorylation of a number of cellular substrates including the JAK family kinases TYK2 and JAK2. In turn, recruited STAT4 gets phosphorylated and translocates to the nucleus where it regulates cytokine/growth factor responsive genes. As part of IL-35, plays essential roles in maintaining the immune homeostasis of the liver microenvironment and also functions as an immune-suppressive cytokine. Mediates biological events through unconventional receptors composed of IL12RB2 and gp130/IL6ST heterodimers or homodimers. Signaling requires the transcription factors STAT1 and STAT4, which form a unique heterodimer that binds to distinct DNA sites. This is Interleukin-12 subunit alpha (Il12a) from Rattus norvegicus (Rat).